Reading from the N-terminus, the 142-residue chain is Hemoglobin subunit alpha (142 aa).

Serine 1 carries the post-translational modification N-acetylserine. Residues 1-142 (SLSDKDKNTV…LALALSERYR (142 aa)) form the Globin domain. An O2-binding site is contributed by histidine 59. A heme b-binding site is contributed by histidine 88.

Belongs to the globin family. As to quaternary structure, heterotetramer of two alpha chains and two beta chains. Can form polymers. As to expression, red blood cells.

Its function is as follows. Involved in oxygen transport from gills to the various peripheral tissues. The protein is Hemoglobin subunit alpha (hba) of Chelidonichthys kumu (Bluefin gurnard).